Consider the following 117-residue polypeptide: NADPH-dependent 7-cyano-7-deazaguanine reductase (117 aa).

Cys31 serves as the catalytic Thioimide intermediate. Asp38 serves as the catalytic Proton donor. Substrate contacts are provided by residues 53–55 and 72–73; these read IEL and YE.

The protein belongs to the GTP cyclohydrolase I family. QueF type 1 subfamily.

It is found in the cytoplasm. The enzyme catalyses 7-aminomethyl-7-carbaguanine + 2 NADP(+) = 7-cyano-7-deazaguanine + 2 NADPH + 3 H(+). The protein operates within tRNA modification; tRNA-queuosine biosynthesis. Its function is as follows. Catalyzes the NADPH-dependent reduction of 7-cyano-7-deazaguanine (preQ0) to 7-aminomethyl-7-deazaguanine (preQ1). The sequence is that of NADPH-dependent 7-cyano-7-deazaguanine reductase from Chlorobaculum tepidum (strain ATCC 49652 / DSM 12025 / NBRC 103806 / TLS) (Chlorobium tepidum).